A 267-amino-acid polypeptide reads, in one-letter code: Chlorophyll a-b binding protein 3B, chloroplastic (267 aa).

The transit peptide at Met1–Thr34 directs the protein to the chloroplast. Residues Lys19–Xaa52 are disordered. Residues Leu153–Val173 traverse the membrane as a helical segment. Chlorophyll b is bound by residues Val154, Ser158, Gln166, Glu174, Arg177, and Leu183. Chlorophyll a-binding residues include Lys214, Glu215, Asn218, Arg220, Gln232, His247, and Ala256. The chain crosses the membrane as a helical span at residues Leu221 to Leu241. Residue Phe263 coordinates chlorophyll b.

Belongs to the light-harvesting chlorophyll a/b-binding (LHC) protein family. As to quaternary structure, the LHC complex consists of chlorophyll a-b binding proteins. Binds at least 14 chlorophylls (8 Chl-a and 6 Chl-b) and carotenoids such as lutein and neoxanthin. is required as a cofactor. In terms of processing, photoregulated by reversible phosphorylation of its threonine residues.

Its subcellular location is the plastid. The protein localises to the chloroplast thylakoid membrane. In terms of biological role, the light-harvesting complex (LHC) functions as a light receptor, it captures and delivers excitation energy to photosystems with which it is closely associated. The polypeptide is Chlorophyll a-b binding protein 3B, chloroplastic (CAB3B) (Solanum lycopersicum (Tomato)).